A 415-amino-acid chain; its full sequence is Alditol oxidase (415 aa).

The region spanning I12–A179 is the FAD-binding PCMH-type domain. Position 46 is a pros-8alpha-FAD histidine (H46). FAD is bound by residues S106, S111, G114, T118 to H121, and V169. Position 106 (S106) interacts with xylitol. Residues E317, R319, and T342 each contribute to the xylitol site. Residue R319 participates in FAD binding. H369 lines the FAD pocket. K372 serves as a coordination point for xylitol.

It belongs to the oxygen-dependent FAD-linked oxidoreductase family. Monomer. The cofactor is FAD.

It catalyses the reaction an alditol + O2 = an aldose + H2O2. The catalysed reaction is xylitol + O2 = D-xylose + H2O2. It carries out the reaction D-sorbitol + O2 = D-glucose + H2O2. Functionally, oxidase that performs selective oxidation of the terminal primary hydroxyl group of several alditols, with a reduction of O2 to H2O2. Shows highest activity on xylitol and D-sorbitol, and to a lesser extent, can also use galactitol, D-mannitol, and D-arabitol as substrates in vitro. Is not active on D-glucose, D-xylose, D-galactose, D-mannose, D-fructose, L-sorbose, L-fucose, myoinositol, glycerol, ethyl alcohol, and meso-erythritol. This Streptomyces sp. (strain IKD472 / FERM P-14339) protein is Alditol oxidase.